A 225-amino-acid polypeptide reads, in one-letter code: Probable GTP-binding protein EngB (225 aa).

Residues 31–204 (VGVEIAFAGR…LGILDSWCKP (174 aa)) enclose the EngB-type G domain. GTP contacts are provided by residues 39–46 (GRSNAGKS), 65–69 (GRTQL), 83–86 (DLPG), 150–153 (TKAD), and 183–185 (FSS). Residues Ser46 and Thr67 each coordinate Mg(2+).

The protein belongs to the TRAFAC class TrmE-Era-EngA-EngB-Septin-like GTPase superfamily. EngB GTPase family. Mg(2+) is required as a cofactor.

Necessary for normal cell division and for the maintenance of normal septation. This is Probable GTP-binding protein EngB from Shewanella pealeana (strain ATCC 700345 / ANG-SQ1).